A 267-amino-acid polypeptide reads, in one-letter code: Deoxyribose-phosphate aldolase (267 aa).

Asp-123 serves as the catalytic Proton donor/acceptor. Lys-185 functions as the Schiff-base intermediate with acetaldehyde in the catalytic mechanism. Lys-217 (proton donor/acceptor) is an active-site residue.

This sequence belongs to the DeoC/FbaB aldolase family. DeoC type 1 subfamily.

It is found in the cytoplasm. The catalysed reaction is 2-deoxy-D-ribose 5-phosphate = D-glyceraldehyde 3-phosphate + acetaldehyde. The protein operates within carbohydrate degradation; 2-deoxy-D-ribose 1-phosphate degradation; D-glyceraldehyde 3-phosphate and acetaldehyde from 2-deoxy-alpha-D-ribose 1-phosphate: step 2/2. Functionally, catalyzes a reversible aldol reaction between acetaldehyde and D-glyceraldehyde 3-phosphate to generate 2-deoxy-D-ribose 5-phosphate. The protein is Deoxyribose-phosphate aldolase of Coccidioides immitis (strain RS) (Valley fever fungus).